Reading from the N-terminus, the 143-residue chain is Nucleoside diphosphate kinase (143 aa).

Residues K11, F59, R87, T93, R104, and N114 each contribute to the ATP site. The active-site Pros-phosphohistidine intermediate is H117.

This sequence belongs to the NDK family. As to quaternary structure, homotetramer. Mg(2+) serves as cofactor.

The protein localises to the cytoplasm. The enzyme catalyses a 2'-deoxyribonucleoside 5'-diphosphate + ATP = a 2'-deoxyribonucleoside 5'-triphosphate + ADP. It catalyses the reaction a ribonucleoside 5'-diphosphate + ATP = a ribonucleoside 5'-triphosphate + ADP. Major role in the synthesis of nucleoside triphosphates other than ATP. The ATP gamma phosphate is transferred to the NDP beta phosphate via a ping-pong mechanism, using a phosphorylated active-site intermediate. The protein is Nucleoside diphosphate kinase of Klebsiella pneumoniae (strain 342).